We begin with the raw amino-acid sequence, 216 residues long: Pyrophosphatase PpaX (216 aa).

Asp9 (nucleophile) is an active-site residue.

This sequence belongs to the HAD-like hydrolase superfamily. PpaX family. The cofactor is Mg(2+).

The catalysed reaction is diphosphate + H2O = 2 phosphate + H(+). In terms of biological role, hydrolyzes pyrophosphate formed during P-Ser-HPr dephosphorylation by HPrK/P. Might play a role in controlling the intracellular pyrophosphate pool. The sequence is that of Pyrophosphatase PpaX from Bacillus thuringiensis (strain Al Hakam).